A 120-amino-acid chain; its full sequence is Large ribosomal subunit protein bL12 (120 aa).

It belongs to the bacterial ribosomal protein bL12 family. Homodimer. Part of the ribosomal stalk of the 50S ribosomal subunit. Forms a multimeric L10(L12)X complex, where L10 forms an elongated spine to which 2 to 4 L12 dimers bind in a sequential fashion. Binds GTP-bound translation factors.

Forms part of the ribosomal stalk which helps the ribosome interact with GTP-bound translation factors. Is thus essential for accurate translation. This is Large ribosomal subunit protein bL12 from Alkaliphilus metalliredigens (strain QYMF).